Here is a 116-residue protein sequence, read N- to C-terminus: Iron-sulfur cluster insertion protein ErpA (116 aa).

Iron-sulfur cluster contacts are provided by Cys-44, Cys-108, and Cys-110.

Belongs to the HesB/IscA family. As to quaternary structure, homodimer. The cofactor is iron-sulfur cluster.

In terms of biological role, required for insertion of 4Fe-4S clusters for at least IspG. The chain is Iron-sulfur cluster insertion protein ErpA from Aeromonas salmonicida (strain A449).